The following is a 336-amino-acid chain: NADH-cytochrome b5 reductase 2 (336 aa).

Residues 28–50 traverse the membrane as a helical segment; that stretch reads GGSSNGALYVGIGAAGLAGAYIY. Residues 84-189 enclose the FAD-binding FR-type domain; sequence QGFISLLLDK…KGPIPKYPWS (106 aa). 192-227 contacts FAD; it reads KHEHIALIAGGTGITPMWQTARAIFKNPEDKTKVTL.

This sequence belongs to the flavoprotein pyridine nucleotide cytochrome reductase family. Requires FAD as cofactor.

The protein localises to the mitochondrion outer membrane. The enzyme catalyses 2 Fe(III)-[cytochrome b5] + NADH = 2 Fe(II)-[cytochrome b5] + NAD(+) + H(+). In terms of biological role, may mediate the reduction of outer membrane cytochrome b5. The chain is NADH-cytochrome b5 reductase 2 (MCR1) from Phaeosphaeria nodorum (strain SN15 / ATCC MYA-4574 / FGSC 10173) (Glume blotch fungus).